The primary structure comprises 360 residues: 3-dehydroquinate synthase (360 aa).

NAD(+)-binding positions include 71–76 (DGEQYK), 105–109 (GVVGD), 129–130 (TT), K142, K151, and 169–172 (TLNT). Zn(2+)-binding residues include E184, H248, and H265.

The protein belongs to the sugar phosphate cyclases superfamily. Dehydroquinate synthase family. The cofactor is Co(2+). Requires Zn(2+) as cofactor. It depends on NAD(+) as a cofactor.

It is found in the cytoplasm. It carries out the reaction 7-phospho-2-dehydro-3-deoxy-D-arabino-heptonate = 3-dehydroquinate + phosphate. It functions in the pathway metabolic intermediate biosynthesis; chorismate biosynthesis; chorismate from D-erythrose 4-phosphate and phosphoenolpyruvate: step 2/7. Catalyzes the conversion of 3-deoxy-D-arabino-heptulosonate 7-phosphate (DAHP) to dehydroquinate (DHQ). This chain is 3-dehydroquinate synthase, found in Coxiella burnetii (strain RSA 331 / Henzerling II).